A 217-amino-acid polypeptide reads, in one-letter code: Thymidylate kinase (217 aa).

14–21 provides a ligand contact to ATP; it reads GNEGSGKT.

Belongs to the thymidylate kinase family.

The catalysed reaction is dTMP + ATP = dTDP + ADP. In terms of biological role, phosphorylation of dTMP to form dTDP in both de novo and salvage pathways of dTTP synthesis. This is Thymidylate kinase from Orientia tsutsugamushi (strain Ikeda) (Rickettsia tsutsugamushi).